Here is a 759-residue protein sequence, read N- to C-terminus: Secretin XpsD (759 aa).

An N-terminal signal peptide occupies residues 1-21 (MSERMTPRLFPVSLLIGLLAG). Cysteine 22 carries N-palmitoyl cysteine lipidation. Cysteine 22 is lipidated: S-diacylglycerol cysteine. Positions 40–51 (VGAAGATQTTAE) are enriched in low complexity. The tract at residues 40–69 (VGAAGATQTTAEQRADGNASAKPTPVIRRG) is disordered. The tract at residues 92–187 (GSATFNFEGE…APSTASPSAA (96 aa)) is N0. The segment at 189 to 253 (GFEVRVVPLK…VQIFDVDWLS (65 aa)) is N1. Positions 254–323 (GMSVGVFPIQ…IQQWLDRIDS (70 aa)) are N2. Positions 326-474 (GGVRLFSYEL…SIRDVIEKLD (149 aa)) are N3. Positions 352–434 (GGRGNGGNSG…PPSTNQNGSV (83 aa)) are disordered. Gly residues predominate over residues 392–401 (ATGGDIGGTS). A compositionally biased stretch (polar residues) spans 425 to 434 (PPSTNQNGSV). The segment at 479-734 (QVHIEAQIAE…VLITPSIVRN (256 aa)) is secretin. The tract at residues 736 to 759 (QDARDLTDEYGSKFKSMRPMDVHK) is s domain.

Belongs to the bacterial secretin family. GSP D subfamily. As to quaternary structure, forms a cylindrical channel with 15 subunits. Binds to XpsN.

It is found in the cell outer membrane. Functionally, involved in a type II secretion system (T2SS, formerly general secretion pathway, GSP) for the export of proteins. This subunit forms the outer membrane channel. This chain is Secretin XpsD (xpsD), found in Xanthomonas campestris pv. campestris (strain ATCC 33913 / DSM 3586 / NCPPB 528 / LMG 568 / P 25).